A 420-amino-acid chain; its full sequence is Serine hydroxymethyltransferase (420 aa).

(6S)-5,6,7,8-tetrahydrofolate-binding positions include Leu-121 and Gly-125 to Leu-127. Lys-229 bears the N6-(pyridoxal phosphate)lysine mark.

This sequence belongs to the SHMT family. Homodimer. It depends on pyridoxal 5'-phosphate as a cofactor.

The protein resides in the cytoplasm. It catalyses the reaction (6R)-5,10-methylene-5,6,7,8-tetrahydrofolate + glycine + H2O = (6S)-5,6,7,8-tetrahydrofolate + L-serine. It participates in one-carbon metabolism; tetrahydrofolate interconversion. It functions in the pathway amino-acid biosynthesis; glycine biosynthesis; glycine from L-serine: step 1/1. Functionally, catalyzes the reversible interconversion of serine and glycine with tetrahydrofolate (THF) serving as the one-carbon carrier. This reaction serves as the major source of one-carbon groups required for the biosynthesis of purines, thymidylate, methionine, and other important biomolecules. Also exhibits THF-independent aldolase activity toward beta-hydroxyamino acids, producing glycine and aldehydes, via a retro-aldol mechanism. The chain is Serine hydroxymethyltransferase from Aggregatibacter actinomycetemcomitans (Actinobacillus actinomycetemcomitans).